A 60-amino-acid polypeptide reads, in one-letter code: Large ribosomal subunit protein uL30 (60 aa).

It belongs to the universal ribosomal protein uL30 family. Part of the 50S ribosomal subunit.

The sequence is that of Large ribosomal subunit protein uL30 from Streptomyces coelicolor (strain ATCC BAA-471 / A3(2) / M145).